We begin with the raw amino-acid sequence, 291 residues long: UPF0276 protein VV1_0952 (291 aa).

This sequence belongs to the UPF0276 family.

The polypeptide is UPF0276 protein VV1_0952 (Vibrio vulnificus (strain CMCP6)).